Here is a 447-residue protein sequence, read N- to C-terminus: Tubulin alpha-2 chain (447 aa).

The GTP site is built by Gln-11, Glu-71, Gly-144, Thr-145, Thr-179, Asn-206, and Asn-228. Glu-71 contributes to the Mg(2+) binding site. The active site involves Glu-254.

It belongs to the tubulin family. Dimer of alpha and beta chains. A typical microtubule is a hollow water-filled tube with an outer diameter of 25 nm and an inner diameter of 15 nM. Alpha-beta heterodimers associate head-to-tail to form protofilaments running lengthwise along the microtubule wall with the beta-tubulin subunit facing the microtubule plus end conferring a structural polarity. Microtubules usually have 13 protofilaments but different protofilament numbers can be found in some organisms and specialized cells. Mg(2+) serves as cofactor. Post-translationally, undergoes a tyrosination/detyrosination cycle, the cyclic removal and re-addition of a C-terminal tyrosine residue by the enzymes tubulin tyrosine carboxypeptidase (TTCP) and tubulin tyrosine ligase (TTL), respectively.

Its subcellular location is the cytoplasm. The protein resides in the cytoskeleton. The enzyme catalyses GTP + H2O = GDP + phosphate + H(+). Its function is as follows. Tubulin is the major constituent of microtubules, a cylinder consisting of laterally associated linear protofilaments composed of alpha- and beta-tubulin heterodimers. Microtubules grow by the addition of GTP-tubulin dimers to the microtubule end, where a stabilizing cap forms. Below the cap, tubulin dimers are in GDP-bound state, owing to GTPase activity of alpha-tubulin. This chain is Tubulin alpha-2 chain (TUBA2), found in Eleusine indica (Goosegrass).